Here is a 194-residue protein sequence, read N- to C-terminus: Molybdenum cofactor guanylyltransferase (194 aa).

GTP is bound by residues 12 to 14, lysine 25, asparagine 53, aspartate 70, and aspartate 100; that span reads LAG. Aspartate 100 lines the Mg(2+) pocket.

It belongs to the MobA family. Monomer. Mg(2+) serves as cofactor.

It localises to the cytoplasm. It carries out the reaction Mo-molybdopterin + GTP + H(+) = Mo-molybdopterin guanine dinucleotide + diphosphate. Its function is as follows. Transfers a GMP moiety from GTP to Mo-molybdopterin (Mo-MPT) cofactor (Moco or molybdenum cofactor) to form Mo-molybdopterin guanine dinucleotide (Mo-MGD) cofactor. The protein is Molybdenum cofactor guanylyltransferase of Aliivibrio salmonicida (strain LFI1238) (Vibrio salmonicida (strain LFI1238)).